A 359-amino-acid polypeptide reads, in one-letter code: Chorismate synthase (359 aa).

Arg47 contributes to the NADP(+) binding site. Residues 123–125 (RSS), Gly283, 298–302 (KPTSS), and Arg326 each bind FMN.

It belongs to the chorismate synthase family. Homotetramer. It depends on FMNH2 as a cofactor.

The catalysed reaction is 5-O-(1-carboxyvinyl)-3-phosphoshikimate = chorismate + phosphate. The protein operates within metabolic intermediate biosynthesis; chorismate biosynthesis; chorismate from D-erythrose 4-phosphate and phosphoenolpyruvate: step 7/7. In terms of biological role, catalyzes the anti-1,4-elimination of the C-3 phosphate and the C-6 proR hydrogen from 5-enolpyruvylshikimate-3-phosphate (EPSP) to yield chorismate, which is the branch point compound that serves as the starting substrate for the three terminal pathways of aromatic amino acid biosynthesis. This reaction introduces a second double bond into the aromatic ring system. The chain is Chorismate synthase from Chlamydia pneumoniae (Chlamydophila pneumoniae).